Consider the following 242-residue polypeptide: Methylthioribulose-1-phosphate dehydratase (242 aa).

Phosphoserine is present on Ser-87. Residue Cys-97 participates in substrate binding. Residues His-115 and His-117 each contribute to the Zn(2+) site. Glu-139 functions as the Proton donor/acceptor in the catalytic mechanism. His-195 serves as a coordination point for Zn(2+).

Belongs to the aldolase class II family. MtnB subfamily. As to quaternary structure, homotetramer. Interacts with APAF1. May interact with CASP1. Requires Zn(2+) as cofactor. In terms of tissue distribution, isoform 1 is ubiquitously expressed. Isoform 2 is expressed at lower levels and detected in heart, brain, pancreas, liver, placenta, skeletal muscle and kidney.

The protein localises to the cytoplasm. The catalysed reaction is 5-(methylsulfanyl)-D-ribulose 1-phosphate = 5-methylsulfanyl-2,3-dioxopentyl phosphate + H2O. The protein operates within amino-acid biosynthesis; L-methionine biosynthesis via salvage pathway; L-methionine from S-methyl-5-thio-alpha-D-ribose 1-phosphate: step 2/6. Its function is as follows. Catalyzes the dehydration of methylthioribulose-1-phosphate (MTRu-1-P) into 2,3-diketo-5-methylthiopentyl-1-phosphate (DK-MTP-1-P). Functions in the methionine salvage pathway, which plays a key role in cancer, apoptosis, microbial proliferation and inflammation. May inhibit the CASP1-related inflammatory response (pyroptosis), the CASP9-dependent apoptotic pathway and the cytochrome c-dependent and APAF1-mediated cell death. The polypeptide is Methylthioribulose-1-phosphate dehydratase (Homo sapiens (Human)).